Consider the following 349-residue polypeptide: Aspartate carbamoyltransferase catalytic subunit (349 aa).

Carbamoyl phosphate contacts are provided by R59 and T60. K87 lines the L-aspartate pocket. Carbamoyl phosphate-binding residues include R109, H142, and Q145. L-aspartate-binding residues include R182 and R253. Positions 294 and 295 each coordinate carbamoyl phosphate.

The protein belongs to the aspartate/ornithine carbamoyltransferase superfamily. ATCase family. Heterododecamer (2C3:3R2) of six catalytic PyrB chains organized as two trimers (C3), and six regulatory PyrI chains organized as three dimers (R2).

It catalyses the reaction carbamoyl phosphate + L-aspartate = N-carbamoyl-L-aspartate + phosphate + H(+). The protein operates within pyrimidine metabolism; UMP biosynthesis via de novo pathway; (S)-dihydroorotate from bicarbonate: step 2/3. Catalyzes the condensation of carbamoyl phosphate and aspartate to form carbamoyl aspartate and inorganic phosphate, the committed step in the de novo pyrimidine nucleotide biosynthesis pathway. The chain is Aspartate carbamoyltransferase catalytic subunit from Synechococcus sp. (strain CC9902).